A 188-amino-acid chain; its full sequence is ATP synthase subunit delta (188 aa).

This sequence belongs to the ATPase delta chain family. F-type ATPases have 2 components, F(1) - the catalytic core - and F(0) - the membrane proton channel. F(1) has five subunits: alpha(3), beta(3), gamma(1), delta(1), epsilon(1). F(0) has three main subunits: a(1), b(2) and c(10-14). The alpha and beta chains form an alternating ring which encloses part of the gamma chain. F(1) is attached to F(0) by a central stalk formed by the gamma and epsilon chains, while a peripheral stalk is formed by the delta and b chains.

The protein localises to the cell inner membrane. F(1)F(0) ATP synthase produces ATP from ADP in the presence of a proton or sodium gradient. F-type ATPases consist of two structural domains, F(1) containing the extramembraneous catalytic core and F(0) containing the membrane proton channel, linked together by a central stalk and a peripheral stalk. During catalysis, ATP synthesis in the catalytic domain of F(1) is coupled via a rotary mechanism of the central stalk subunits to proton translocation. Functionally, this protein is part of the stalk that links CF(0) to CF(1). It either transmits conformational changes from CF(0) to CF(1) or is implicated in proton conduction. The sequence is that of ATP synthase subunit delta from Rhizobium etli (strain CIAT 652).